The following is a 537-amino-acid chain: MTVSAKNIPAPDLVPVRRALISVSDKTGIVDFARSLAAREVALASTGGTAALLARSGIGVMDVSQLTGFPEIMDGRVKTLHPAVHGGLLAIRDDPDHRSAMETHAIKPIDLVVINLYPFEDVRFGGGDYAATVENIDIGGPAMLRAAAKNHAYVAVVTDPADYARVLEALEKNDGALPYRLRQELAAKAYARTAAYDAAISQWFAESLAIAEPEWRSFGGRLAQVMRYGENPHQQAGFYATGEKRPGVATARQVQGKQLSYNNINDTDAAFELVCEFDPKKVAAVAIIKHANPCGVAEGTSLAEAYRKALACDPVSAFGGIVALNRILDAEAAEEIAKIFTEVIIAPDATEEAQAIIATKKNLRLLLTEGVADPRAPGLSAKTVAGGLLVQTRDNGVIDDLDLRVVTRRAPSEKEMANLKFAFRVAKHVKSNAIVYARDLATVGIGAGQMSRVDSARIAARKAEDAAAAAGGQPLTKGSVVASDAFFPFADGLLSAVEAGATAVIQPGGSMRDDEVIKAADEHGIAMVFTGMRHFRH.

In terms of domain architecture, MGS-like spans isoleucine 8–threonine 158.

The protein belongs to the PurH family.

The catalysed reaction is (6R)-10-formyltetrahydrofolate + 5-amino-1-(5-phospho-beta-D-ribosyl)imidazole-4-carboxamide = 5-formamido-1-(5-phospho-D-ribosyl)imidazole-4-carboxamide + (6S)-5,6,7,8-tetrahydrofolate. It carries out the reaction IMP + H2O = 5-formamido-1-(5-phospho-D-ribosyl)imidazole-4-carboxamide. It functions in the pathway purine metabolism; IMP biosynthesis via de novo pathway; 5-formamido-1-(5-phospho-D-ribosyl)imidazole-4-carboxamide from 5-amino-1-(5-phospho-D-ribosyl)imidazole-4-carboxamide (10-formyl THF route): step 1/1. The protein operates within purine metabolism; IMP biosynthesis via de novo pathway; IMP from 5-formamido-1-(5-phospho-D-ribosyl)imidazole-4-carboxamide: step 1/1. The sequence is that of Bifunctional purine biosynthesis protein PurH from Chelativorans sp. (strain BNC1).